The primary structure comprises 283 residues: Putative aquaporin NIP4-1 (283 aa).

Methionine 1 bears the N-acetylmethionine mark. The next 2 helical transmembrane spans lie at 45-65 (LIAE…VVVV) and 70-90 (GGTI…MVMI). The NPA 1 signature appears at 102–104 (NPA). 3 helical membrane-spanning segments follow: residues 122-142 (LYIG…RLMF), 161-181 (ALVA…GVAT), and 189-209 (LAGI…GPIS). The NPA 2 motif lies at 214–216 (NPA). The chain crosses the membrane as a helical span at residues 231–251 (IWVYIVGPVLGVISGGFVYNL). At serine 267 the chain carries Phosphoserine.

Belongs to the MIP/aquaporin (TC 1.A.8) family. NIP (TC 1.A.8.12) subfamily.

The protein resides in the membrane. Its function is as follows. Potential aquaporin, which may facilitate the transport of water and small neutral solutes across cell membranes. In Arabidopsis thaliana (Mouse-ear cress), this protein is Putative aquaporin NIP4-1 (NIP4-1).